Here is a 332-residue protein sequence, read N- to C-terminus: Probable endo-beta-1,4-glucanase B (332 aa).

A signal peptide spans 1–18 (MKFQSTLLLAAAAGSALA). N-linked (GlcNAc...) asparagine glycans are attached at residues N38 and N100. The Proton donor role is filled by E160. An N-linked (GlcNAc...) asparagine glycan is attached at N212. Catalysis depends on E267, which acts as the Nucleophile. A glycan (N-linked (GlcNAc...) asparagine) is linked at N289.

It belongs to the glycosyl hydrolase 5 (cellulase A) family.

It is found in the secreted. The enzyme catalyses Endohydrolysis of (1-&gt;4)-beta-D-glucosidic linkages in cellulose, lichenin and cereal beta-D-glucans.. In terms of biological role, has endoglucanase activity on substrates containing beta-1,4 glycosidic bonds, like in carboxymethylcellulose (CMC), hydroxyethylcellulose (HEC) and beta-glucan. Involved in the degradation of complex natural cellulosic substrates. The sequence is that of Probable endo-beta-1,4-glucanase B (eglB) from Aspergillus kawachii (strain NBRC 4308) (White koji mold).